The chain runs to 69 residues: Alternative ribosome-rescue factor A (69 aa).

It belongs to the alternative ribosome-rescue factor A family. As to quaternary structure, interacts with the 70S ribosome and release factor 2.

In terms of biological role, rescues ribosomes stalled at the 3' end of non-stop mRNAs. Recruits release factor 2 (RF2) to the stalled ribosome, helping position it correctly in the ribosomal A site so its GGQ motif can hydrolyze the peptidyl-tRNA bond. The protein is Alternative ribosome-rescue factor A (arfA) of Haemophilus influenzae (strain ATCC 51907 / DSM 11121 / KW20 / Rd).